Here is a 181-residue protein sequence, read N- to C-terminus: ADP-ribosylation factor 1-like 2 (181 aa).

Glycine 2 is lipidated: N-myristoyl glycine. The interval 3-16 (NVFGSLFKGLFGKR) is important for the stable binding to the membranes. GTP is bound by residues 24-32 (GLDAAGKTT), 126-129 (NKQD), and alanine 160.

This sequence belongs to the small GTPase superfamily. Arf family. Expressed in hypodermis, intestine, spermatheca, uterus, gonadal sheath, vulva cells, pharynx muscle, body wall muscle, head neurons, ventral nerve cord.

It localises to the golgi apparatus membrane. It catalyses the reaction GTP + H2O = GDP + phosphate + H(+). Its activity is regulated as follows. Alternates between an inactive GDP-bound form and an active GTP-bound form. Activated by a guanine nucleotide-exchange factor (GEF) and inactivated by GTPase-activating protein (GAP). In terms of biological role, small GTPase involved in protein trafficking between different compartments. Modulates vesicle budding and uncoating within the Golgi complex. In its GTP-bound form, triggers the recruitment of coatomer proteins to the Golgi membrane. The hydrolysis of ARF1-bound GTP, which is mediated by ARFGAPs proteins, is required for dissociation of coat proteins from Golgi membranes and vesicles. Involved in endoplasmic reticulum dynamics during embryogenesis. Also required for adult germline function. Plays a role in cell shedding during embryogenesis probably by promoting the endocytosis of cell adhesion molecules. During neurogenesis, involved in cell autonomous Q.p neuroblast asymmetric divisions that generate one precursor cell and one apoptotic cell, probably by controlling endocytosis. Plays a role in maintaining mitochondrial morphology. The protein is ADP-ribosylation factor 1-like 2 of Caenorhabditis elegans.